The primary structure comprises 761 residues: MLSDFKQQQQQKHHSHNPPNSHDDTQTKLQVAKLTQVIQKFFTKAAQIILESRAYPETSTPSLYPTKEESSKINKWFNLYMTNIPDSCKDDLKLWKGVDLTTIPPMIIETYIDLRSLPADQTLVLMDDEKHPWTVAKSRGKKQEVVLERWLIEFEPNTTDATVMVEELPLSYKQAIVLFRSIYGFTRLMPAFKVKKNLQNKLPLGNKILDGNQPISSKGRIGLSKPIINTRTNESHMTQKYFQPVHTSLGTLKISVAYRMDSEFCLHENEELLSSHFHKRDEEETKKKVSSSVSPLSSGTSLKETSTSPRKSQPPIRIQPFKVGSMSTSPPVQSPSISQPGTAPIQNQPSVPSSSLERRVSITSNKSTSNASLAAFLRNARSSTPSANNIPIINANPISGTSVPRSFSSSTGHEDSIFVNPDSASNTPRFASSFGSRASRRYSSTSIRQQTPQSDLMGQTNSVDAALSGIDADDDISDFVRMIDSKSDLRLGGGGGGGNSSVHNMSINESSYHGDALNKFQSLRSQYQQLSDSVSASLILQSRHSSRKSSLNSPAGSFDSHHHQHQQQQQQQQNQQQSQSPHTNTTSSIHSHAHSYSHSRMKDARPRSEDHQQTKFSAARRSSNISPTTAVPSSIGTPSSISSRIPHVTTIISSSDVSSTGGNRTKSAATTAIVSGMATSPSIYDYRSPRYQNVFDDDDEDDNDEEEGDREGNQLHEGRNSTESSQNQSKRIMKHIKKDEEDSEDDEDLLFTMSDMNSRNF.

3 stretches are compositionally biased toward low complexity: residues 1–10, 290–303, and 327–340; these read MLSDFKQQQQ, SSSVSPLSSGTSLK, and STSPPVQSPSISQP. Disordered stretches follow at residues 1–25, 277–367, 398–456, 488–507, 544–642, and 691–761; these read MLSDFKQQQQQKHHSHNPPNSHDDT, FHKR…SNKS, ISGT…QSDL, DLRLGGGGGGGNSSVHNMSI, HSSR…SSIS, and YQNV…SRNF. Polar residues-rich tracts occupy residues 344–367 and 400–411; these read PIQNQPSVPSSSLERRVSITSNKS and GTSVPRSFSSST. Positions 429-444 are enriched in low complexity; it reads RFASSFGSRASRRYSS. Polar residues predominate over residues 445 to 456; that stretch reads TSIRQQTPQSDL. Positions 566 to 590 are enriched in low complexity; it reads QQQQQQQQNQQQSQSPHTNTTSSIH. Basic and acidic residues predominate over residues 600–613; that stretch reads RMKDARPRSEDHQQ. Residues 614–631 show a composition bias toward polar residues; sequence TKFSAARRSSNISPTTAV. Positions 632-642 are enriched in low complexity; it reads PSSIGTPSSIS. Positions 695–709 are enriched in acidic residues; the sequence is FDDDDEDDNDEEEGD. Basic and acidic residues predominate over residues 710–720; it reads REGNQLHEGRN. Residues 721-730 show a composition bias toward polar residues; it reads STESSQNQSK.

The protein belongs to the ATG13 family. Fungi subfamily. In terms of assembly, interacts with ATG1 to form the ATG1-ATG13 kinase complex.

The protein localises to the cytoplasm. It is found in the preautophagosomal structure. Its function is as follows. Plays a key role in autophagy. Activates the atg1 kinase in a nutritional condition dependent manner through the TOR pathway, leading to autophagy. Also involved in cytoplasm to vacuole transport (Cvt) and more specifically in Cvt vesicle formation. Seems to play a role in the switching machinery regulating the conversion between the Cvt pathway and autophagy. Finally, plays an important role in biofilm formation and resistance to antifungal compounds such as fluconazole, itraconazole, terbinafine and caspofungin. This Candida albicans (strain SC5314 / ATCC MYA-2876) (Yeast) protein is Autophagy-related protein 13.